Consider the following 246-residue polypeptide: Phosducin (246 aa).

Acidic residues predominate over residues 1–14 (MEEAKSQSLEEDFE). The disordered stretch occupies residues 1–70 (MEEAKSQSLE…GKDSKERVSR (70 aa)). One can recognise a Phosducin domain in the interval 1-244 (MEEAKSQSLE…LEHTKIEEED (244 aa)). Positions 60–69 (NGKDSKERVS) are enriched in basic and acidic residues. Ser-73 carries the phosphoserine; by PKA modification. The tract at residues 111–246 (YGFVYELETG…HTKIEEEDVE (136 aa)) is thioredoxin fold.

Belongs to the phosducin family. Forms a complex with the beta and gamma subunits of the GTP-binding protein, transducin. Interacts with CRX. Light-induced changes in cyclic nucleotide levels modulate the phosphorylation of this protein by cAMP kinase.

The protein resides in the cytoplasm. The protein localises to the cytosol. It is found in the nucleus. It localises to the cell projection. Its subcellular location is the cilium. The protein resides in the photoreceptor outer segment. The protein localises to the photoreceptor inner segment. Its function is as follows. May participate in the regulation of visual phototransduction or in the integration of photoreceptor metabolism. Inhibits the transcriptional activation activity of the cone-rod homeobox CRX. This Homo sapiens (Human) protein is Phosducin (PDC).